We begin with the raw amino-acid sequence, 537 residues long: Zinc finger protein 835 (537 aa).

The tract at residues 12–109 is disordered; it reads AELEGNWKHE…RERGGGPKKP (98 aa). Residues 63–77 are compositionally biased toward polar residues; the sequence is TISSPAATQASVPDD. Basic and acidic residues predominate over residues 89-104; that stretch reads SPKERHPDSRQRERGG. C2H2-type zinc fingers lie at residues 110 to 132, 138 to 160, 166 to 188, 194 to 216, 222 to 244, 250 to 272, 278 to 300, 306 to 328, 334 to 356, 362 to 384, 390 to 412, 418 to 440, 446 to 468, and 474 to 496; these read WKCGDCGKAFSYCSAFILHQRIH, FACPECGKAFSQSVHLTLHQRTH, YACHECGKAFSQGSYLASHWRTH, HRCADCGKAFTRVTHLTQHRRVH, YACAQCAKAFRNRSSLIEHQRIH, YECSACAKAFRFSSALIRHQRIH, YRCGQCAKAFAQIAHLTQHRRVH, YTCQDCGALFSQSASLAEHRRIH, YACGQCAKAFTQVSHLTQHQRTH, YPCHDCGKRFSNRSHLLQHRLVH, YRCLQCGAAFSHVSSLIEHQKIH, YKCGECGKAFSQGSSLALHQRTH, YTCPECGKAFSNRSYLIQHHIVH, and YECSGCGKAFSFSSALIRHQRTH. The disordered stretch occupies residues 497–537; sequence ADSSGRLCPAPTPDSTPGLSQGGETCQQGCPGRNPRGPAED. Positions 509-524 are enriched in polar residues; the sequence is PDSTPGLSQGGETCQQ.

This sequence belongs to the krueppel C2H2-type zinc-finger protein family.

Its subcellular location is the nucleus. Functionally, may be involved in transcriptional regulation. This is Zinc finger protein 835 (ZNF835) from Homo sapiens (Human).